Consider the following 224-residue polypeptide: PKHD-type hydroxylase SO_3913 (224 aa).

The Fe2OG dioxygenase domain occupies 78-176 (QFYPPLFNRY…RTSAFMWLQS (99 aa)). Residues His-96, Asp-98, and His-157 each coordinate Fe cation. Arg-167 contacts 2-oxoglutarate.

It depends on Fe(2+) as a cofactor. The cofactor is L-ascorbate.

The polypeptide is PKHD-type hydroxylase SO_3913 (Shewanella oneidensis (strain ATCC 700550 / JCM 31522 / CIP 106686 / LMG 19005 / NCIMB 14063 / MR-1)).